We begin with the raw amino-acid sequence, 477 residues long: Salivary plasminogen activator alpha 1 (477 aa).

The signal sequence occupies residues 1-36 (MVNTMKTKLLCVLLLCGAVFSLPRQETYRQLARGSR). Positions 40-82 (VACKDEITQMTYRRQESWLRPEVRSKRVEHCQCDRGQARCHTV) constitute a Fibronectin type-I domain. Intrachain disulfides connect Cys42–Cys72, Cys70–Cys79, Cys87–Cys98, Cys92–Cys109, Cys111–Cys120, Cys128–Cys209, Cys149–Cys191, Cys180–Cys204, Cys214–Cys345, Cys257–Cys273, Cys265–Cys334, Cys359–Cys434, Cys391–Cys407, and Cys424–Cys452. Residues 83–121 (PVNSCSEPRCFNGGTCWQAVYFSDFVCQCPAGYTGKRCE) form the EGF-like domain. The 82-residue stretch at 128–209 (CYEGQGVTYR…TSESCSVPVC (82 aa)) folds into the Kringle domain. Asn153 carries an N-linked (GlcNAc...) asparagine glycan. One can recognise a Peptidase S1 domain in the interval 226 to 476 (STGGLFTDIT…YLGWIRDNMH (251 aa)). Residues His272 and Asp321 each act as charge relay system in the active site. N-linked (GlcNAc...) asparagine glycosylation occurs at Asn398. Residue Ser428 is the Charge relay system of the active site.

It belongs to the peptidase S1 family. Monomer.

It localises to the secreted. The enzyme catalyses Specific cleavage of Arg-|-Val bond in plasminogen to form plasmin.. With respect to regulation, activity toward plasminogen is stimulated in the presence of fibrin I. Functionally, probably essential to support the feeding habits of this exclusively haematophagous animal. Potent thrombolytic agent. The protein is Salivary plasminogen activator alpha 1 of Desmodus rotundus (Vampire bat).